A 694-amino-acid polypeptide reads, in one-letter code: Elongation factor G (694 aa).

Positions 8–284 constitute a tr-type G domain; that stretch reads EKLRNIGIVA…AVIDFLPSPV (277 aa). Residues 17 to 24, 81 to 85, and 135 to 138 contribute to the GTP site; these read AHIDAGKT, DTPGH, and NKMD.

Belongs to the TRAFAC class translation factor GTPase superfamily. Classic translation factor GTPase family. EF-G/EF-2 subfamily.

The protein resides in the cytoplasm. Functionally, catalyzes the GTP-dependent ribosomal translocation step during translation elongation. During this step, the ribosome changes from the pre-translocational (PRE) to the post-translocational (POST) state as the newly formed A-site-bound peptidyl-tRNA and P-site-bound deacylated tRNA move to the P and E sites, respectively. Catalyzes the coordinated movement of the two tRNA molecules, the mRNA and conformational changes in the ribosome. This is Elongation factor G from Persephonella marina (strain DSM 14350 / EX-H1).